The primary structure comprises 321 residues: uncharacterized protein (321 aa).

Residues 1–58 (MTPAQLRAYSAVVRLGSVRAAAAELGLSDAGVSMHVAALRKELDDPLFTRTGAGLAFT) form the HTH lysR-type domain. The H-T-H motif DNA-binding region spans 18 to 37 (VRAAAAELGLSDAGVSMHVA).

The protein belongs to the LysR transcriptional regulatory family.

This is an uncharacterized protein from Mycobacterium tuberculosis (strain CDC 1551 / Oshkosh).